The primary structure comprises 694 residues: U-box domain-containing protein 1 (694 aa).

Residues 292–366 enclose the U-box domain; that stretch reads NIPDEFRCPI…HQWCYENNVK (75 aa). 7 ARM repeats span residues 392–432, 435–474, 476–516, 519–558, 560–599, 601–641, and 646–685; these read SENK…LLAK, MDNR…NLSI, DNNK…SLSM, DCKV…NLAV, NPNK…VLLG, SEGL…GLCK, and LVAM…LLNR.

As to quaternary structure, interacts with LYK3. Binds to NORK/DMI2. Post-translationally, phosphorylated by LYK3 in vitro. Phosphorylated by NORK/DMI2. Present ubiquitously at very low levels during nonsymbiotic growth. Accumulates in roots and nodules during symbiotic growth with rhizobia and mycorrhiza.

The protein localises to the cell membrane. It carries out the reaction S-ubiquitinyl-[E2 ubiquitin-conjugating enzyme]-L-cysteine + [acceptor protein]-L-lysine = [E2 ubiquitin-conjugating enzyme]-L-cysteine + N(6)-ubiquitinyl-[acceptor protein]-L-lysine.. It participates in protein modification; protein ubiquitination. Exhibits U-box-dependent E3 ubiquitin ligase activity in vitro. Negatively modulates successive stages of infection and development of rhizobial (e.g. Sinorhizobium meliloti) and arbuscular mycorrhizal fungi (AM, e.g. Rhizophagus irregularis) symbioses, in an ubiquitin ligase activity-dependent manner. Negative regulator of the LYK3 signaling pathway leading to nitrogen-fixing symbiosis (e.g. infection and nodulation) by rhizobia. May be involved in the discrimination of rhizobium strains producing variant Nod factors. This chain is U-box domain-containing protein 1, found in Medicago truncatula (Barrel medic).